We begin with the raw amino-acid sequence, 209 residues long: Large ribosomal subunit protein uL3 (209 aa).

The tract at residues 141-164 is disordered; the sequence is RAVGSMGGSSDPSRTFKSKKMPGH.

The protein belongs to the universal ribosomal protein uL3 family. In terms of assembly, part of the 50S ribosomal subunit. Forms a cluster with proteins L14 and L19.

Its function is as follows. One of the primary rRNA binding proteins, it binds directly near the 3'-end of the 23S rRNA, where it nucleates assembly of the 50S subunit. The chain is Large ribosomal subunit protein uL3 from Clostridium acetobutylicum (strain ATCC 824 / DSM 792 / JCM 1419 / IAM 19013 / LMG 5710 / NBRC 13948 / NRRL B-527 / VKM B-1787 / 2291 / W).